Reading from the N-terminus, the 243-residue chain is MKDILLGVNVDHIATLRQARGTSYPDPAHAASVAEHAGADGITIHLREDRRHIQDRDVYVMAKTIQTRMNLETAVTDEMINIALEVKPEYVCLVPEKREELTTEGGLDVAGNLEKITAATKTLSDAGIKVSLFIDADKAQLDAAKATGAPYVEIHTGAYADATTDEAISKELEHIRQGVKYAASIGLIVNAGHGLHYHNVKPIAAMEEIYELNIGHAIIARAAIDGLDKAVRDMKRLMLEARA.

Asparagine 9 contributes to the 3-amino-2-oxopropyl phosphate binding site. A 1-deoxy-D-xylulose 5-phosphate-binding site is contributed by 11–12; the sequence is DH. 3-amino-2-oxopropyl phosphate is bound at residue arginine 20. The active-site Proton acceptor is histidine 45. 1-deoxy-D-xylulose 5-phosphate is bound by residues arginine 47 and histidine 52. Catalysis depends on glutamate 72, which acts as the Proton acceptor. A 1-deoxy-D-xylulose 5-phosphate-binding site is contributed by threonine 102. The active-site Proton donor is the histidine 193. 3-amino-2-oxopropyl phosphate is bound by residues glycine 194 and 215–216; that span reads GH.

Belongs to the PNP synthase family. Homooctamer; tetramer of dimers.

It localises to the cytoplasm. The catalysed reaction is 3-amino-2-oxopropyl phosphate + 1-deoxy-D-xylulose 5-phosphate = pyridoxine 5'-phosphate + phosphate + 2 H2O + H(+). Its pathway is cofactor biosynthesis; pyridoxine 5'-phosphate biosynthesis; pyridoxine 5'-phosphate from D-erythrose 4-phosphate: step 5/5. Functionally, catalyzes the complicated ring closure reaction between the two acyclic compounds 1-deoxy-D-xylulose-5-phosphate (DXP) and 3-amino-2-oxopropyl phosphate (1-amino-acetone-3-phosphate or AAP) to form pyridoxine 5'-phosphate (PNP) and inorganic phosphate. This chain is Pyridoxine 5'-phosphate synthase, found in Pseudoalteromonas translucida (strain TAC 125).